The chain runs to 962 residues: Thrombospondin-3a (962 aa).

A signal peptide spans 1–23 (MEQMFVHIWVSLVVLMSVWSAQS). The 173-residue stretch at 24 to 196 (DKKQDVPVID…MDTLKLALGG (173 aa)) folds into the Laminin G-like domain. The 42-residue stretch at 277-318 (PRSRCQPNPCFKGVSCMETFEYPGYRCGPCPDGMTGNGTHCQ) folds into the EGF-like 1 domain. Intrachain disulfides connect Cys281-Cys292, Cys286-Cys303, Cys306-Cys317, Cys323-Cys335, Cys329-Cys344, Cys347-Cys371, Cys377-Cys390, Cys384-Cys399, Cys402-Cys414, Cys420-Cys434, Cys428-Cys444, Cys446-Cys457, Cys473-Cys480, Cys485-Cys505, Cys521-Cys541, Cys544-Cys564, Cys580-Cys600, Cys603-Cys623, Cys641-Cys661, and Cys684-Cys704. Asn313 carries an N-linked (GlcNAc...) asparagine glycan. The 40-residue stretch at 319-358 (DIDECSEAQPCYTPGACVNTARGFTCESCPPGMWGPPLSG) folds into the EGF-like 2; calcium-binding domain. The region spanning 373-412 (DIDECVDLANACTPNSVCINIIGSFRCGQCKTGYVGNQTA) is the EGF-like 3; calcium-binding domain. Asn409 is a glycosylation site (N-linked (GlcNAc...) asparagine). In terms of domain architecture, EGF-like 4 spans 416 to 458 (PRKSCSSLSFNPCDANAHCVMQRNGDVSCACNVGWAGNGHTCG). TSP type-3 repeat units lie at residues 459–493 (KDTDIDGYPDRSLPCMDNHKHCRQDNCVYTPNSGQ), 494–529 (EDADNDGIGDQCDEDADGDGIKNVEDNCRLVSNKDQ), 530–552 (QNSDTDSFGDACDNCPTVPNIDQ), 553–588 (KDTDSNGEGDACDDDIDGDGIQNVLDNCPKVPNPMQ), 589–611 (TDRDRDGVGDACDSCPEISNPMQ), 612–649 (TDVDNDLVGDVCDTNQDTDGDGHQDTRDNCPDIPNSSQ), 650–692 (LDSD…NPNQ), and 693–728 (KDSDSNGVGDVCENDFDNDSVMDLVDVCPESAEVTL). Residues 548-704 (PNIDQKDTDS…SDSNGVGDVC (157 aa)) are disordered. A compositionally biased stretch (acidic residues) spans 557–570 (SNGEGDACDDDIDG). The span at 631–641 (GDGHQDTRDNC) shows a compositional bias: basic and acidic residues. Asn646 is a glycosylation site (N-linked (GlcNAc...) asparagine). Residues 652–669 (SDNDGIGDDCDEDDDNDG) are compositionally biased toward acidic residues. The N-linked (GlcNAc...) asparagine glycan is linked to Asn710. Cys720 and Cys941 are disulfide-bonded. The 215-residue stretch at 732–946 (RAYQTVILDP…LRYRCNDTVP (215 aa)) folds into the TSP C-terminal domain. Asn942 carries an N-linked (GlcNAc...) asparagine glycan.

Belongs to the thrombospondin family. Oligomer; disulfide-linked.

In terms of biological role, adhesive glycoprotein that mediates cell-to-cell and cell-to-matrix interactions. Can bind to fibrinogen, fibronectin, laminin and type V collagen. This Danio rerio (Zebrafish) protein is Thrombospondin-3a (thbs3a).